We begin with the raw amino-acid sequence, 177 residues long: Prorelaxin (177 aa).

The N-terminal stretch at 1 to 25 (MLRWFLSHLLGVWLLLSQLPREIPA) is a signal peptide. 3 disulfide bridges follow: Cys34-Cys164, Cys46-Cys177, and Cys163-Cys168. A propeptide spans 63 to 149 (QISEPLAEVV…KSLSKLDKHP (87 aa)) (connecting peptide).

This sequence belongs to the insulin family. In terms of assembly, heterodimer of a B chain and an A chain linked by two disulfide bonds. In terms of tissue distribution, placenta; syncytiotrophoblast.

It localises to the secreted. Relaxin is an ovarian hormone that acts with estrogen to produce dilatation of the birth canal in many mammals. The protein is Prorelaxin (RLN) of Canis lupus familiaris (Dog).